Reading from the N-terminus, the 501-residue chain is Glutamyl-tRNA(Gln) amidotransferase subunit A (501 aa).

Catalysis depends on charge relay system residues K80 and S155. The Acyl-ester intermediate role is filled by S179.

This sequence belongs to the amidase family. GatA subfamily. In terms of assembly, heterotrimer of A, B and C subunits.

The enzyme catalyses L-glutamyl-tRNA(Gln) + L-glutamine + ATP + H2O = L-glutaminyl-tRNA(Gln) + L-glutamate + ADP + phosphate + H(+). In terms of biological role, allows the formation of correctly charged Gln-tRNA(Gln) through the transamidation of misacylated Glu-tRNA(Gln) in organisms which lack glutaminyl-tRNA synthetase. The reaction takes place in the presence of glutamine and ATP through an activated gamma-phospho-Glu-tRNA(Gln). This is Glutamyl-tRNA(Gln) amidotransferase subunit A from Cupriavidus necator (strain ATCC 17699 / DSM 428 / KCTC 22496 / NCIMB 10442 / H16 / Stanier 337) (Ralstonia eutropha).